A 515-amino-acid polypeptide reads, in one-letter code: Maturase K (515 aa).

This sequence belongs to the intron maturase 2 family. MatK subfamily.

It localises to the plastid. The protein localises to the chloroplast. Functionally, usually encoded in the trnK tRNA gene intron. Probably assists in splicing its own and other chloroplast group II introns. This Trillium luteum (Yellow wakerobin) protein is Maturase K.